The sequence spans 731 residues: 1,4-alpha-glucan branching enzyme GlgB (731 aa).

Catalysis depends on aspartate 411, which acts as the Nucleophile. Glutamate 464 (proton donor) is an active-site residue.

This sequence belongs to the glycosyl hydrolase 13 family. GlgB subfamily. In terms of assembly, monomer.

The enzyme catalyses Transfers a segment of a (1-&gt;4)-alpha-D-glucan chain to a primary hydroxy group in a similar glucan chain.. It participates in glycan biosynthesis; glycogen biosynthesis. Catalyzes the formation of the alpha-1,6-glucosidic linkages in glycogen by scission of a 1,4-alpha-linked oligosaccharide from growing alpha-1,4-glucan chains and the subsequent attachment of the oligosaccharide to the alpha-1,6 position. In Mycobacterium ulcerans (strain Agy99), this protein is 1,4-alpha-glucan branching enzyme GlgB.